Consider the following 441-residue polypeptide: Glutamate--tRNA ligase 2 (441 aa).

The short motif at 9-19 (PSPTGYIHVGN) is the 'HIGH' region element. The short motif at 239 to 243 (ALSKR) is the 'KMSKS' region element. Position 242 (lysine 242) interacts with ATP.

It belongs to the class-I aminoacyl-tRNA synthetase family. Glutamate--tRNA ligase type 1 subfamily. Monomer.

The protein localises to the cytoplasm. It catalyses the reaction tRNA(Glu) + L-glutamate + ATP = L-glutamyl-tRNA(Glu) + AMP + diphosphate. Catalyzes the attachment of glutamate to tRNA(Glu) in a two-step reaction: glutamate is first activated by ATP to form Glu-AMP and then transferred to the acceptor end of tRNA(Glu). This Cereibacter sphaeroides (strain ATCC 17023 / DSM 158 / JCM 6121 / CCUG 31486 / LMG 2827 / NBRC 12203 / NCIMB 8253 / ATH 2.4.1.) (Rhodobacter sphaeroides) protein is Glutamate--tRNA ligase 2.